The chain runs to 196 residues: Protein hunchback (196 aa).

Disordered stretches follow at residues 16 to 56, 63 to 82, and 156 to 196; these read SHHH…SHTN, LKQQQQQQQQHQHQQQQQPM, and LTPP…KYMA. The span at 17-29 shows a compositional bias: basic residues; the sequence is HHHHHHHAHHSHH. Low complexity-rich tracts occupy residues 33 to 43 and 65 to 80; these read SNSNASNSPHQ and QQQQQQQQHQHQQQQQ. Residues 177–196 are compositionally biased toward basic and acidic residues; that stretch reads EPEKEHDLMSNSSEDMKYMA.

This sequence belongs to the hunchback C2H2-type zinc-finger protein family.

It is found in the nucleus. In terms of biological role, gap class segmentation protein that controls development of head structures. The chain is Protein hunchback (hb) from Drosophila adunca (Fruit fly).